Here is a 1235-residue protein sequence, read N- to C-terminus: UPF0507 protein DEHA2G04334g (1235 aa).

The region spanning 323–487 (QNDDSDAIKI…LSSSMNDEPQ (165 aa)) is the VPS9 domain. The disordered stretch occupies residues 1097-1124 (STTEADTTDTTDATDATHASPNLANSTN). Over residues 1100-1115 (EADTTDTTDATDATHA) the composition is skewed to low complexity.

Belongs to the UPF0507 family.

The protein is UPF0507 protein DEHA2G04334g of Debaryomyces hansenii (strain ATCC 36239 / CBS 767 / BCRC 21394 / JCM 1990 / NBRC 0083 / IGC 2968) (Yeast).